A 287-amino-acid polypeptide reads, in one-letter code: Bifunctional protein FolD (287 aa).

Residues 165–167, S190, and I231 each bind NADP(+); that span reads GRS.

This sequence belongs to the tetrahydrofolate dehydrogenase/cyclohydrolase family. Homodimer.

The catalysed reaction is (6R)-5,10-methylene-5,6,7,8-tetrahydrofolate + NADP(+) = (6R)-5,10-methenyltetrahydrofolate + NADPH. The enzyme catalyses (6R)-5,10-methenyltetrahydrofolate + H2O = (6R)-10-formyltetrahydrofolate + H(+). It participates in one-carbon metabolism; tetrahydrofolate interconversion. In terms of biological role, catalyzes the oxidation of 5,10-methylenetetrahydrofolate to 5,10-methenyltetrahydrofolate and then the hydrolysis of 5,10-methenyltetrahydrofolate to 10-formyltetrahydrofolate. This Trichodesmium erythraeum (strain IMS101) protein is Bifunctional protein FolD.